The primary structure comprises 725 residues: IML2-like protein YKR018C (725 aa).

Phosphothreonine is present on Thr-196. Ser-246, Ser-377, and Ser-380 each carry phosphoserine.

This sequence belongs to the IML2 family.

The protein resides in the cytoplasm. The protein localises to the nucleus. The polypeptide is IML2-like protein YKR018C (Saccharomyces cerevisiae (strain ATCC 204508 / S288c) (Baker's yeast)).